The chain runs to 244 residues: Protein crossbronx (244 aa).

The UBC core domain occupies 20–176 (QQEYKILAEY…VQENIKESKE (157 aa)). The tract at residues 209 to 244 (AGRSKQTEPSAQQGNGGHATGLSWVKEGEFKPLSIE) is disordered.

It belongs to the ubiquitin-conjugating enzyme family. FTS subfamily.

The protein is Protein crossbronx (cbx) of Drosophila simulans (Fruit fly).